Here is a 227-residue protein sequence, read N- to C-terminus: PKHD-type hydroxylase Dtpsy_0528 (227 aa).

The region spanning 78-178 (TIYPPKFNRY…RVASFFWIES (101 aa)) is the Fe2OG dioxygenase domain. Fe cation contacts are provided by His96, Asp98, and His159. Arg169 serves as a coordination point for 2-oxoglutarate.

The cofactor is Fe(2+). L-ascorbate serves as cofactor.

The sequence is that of PKHD-type hydroxylase Dtpsy_0528 from Acidovorax ebreus (strain TPSY) (Diaphorobacter sp. (strain TPSY)).